Consider the following 373-residue polypeptide: MKVKVLSLLVPALLVAGAANAAEVYNKDGNKLDLYGKVDGLHYFSDDKSVDGDQTYMRLGFKGETQVTDQLTGYGQWEYQIQGNSAENENNSWTRVAFAGLKFQDVGSFDYGRNYGVVYDVTSWTDVLPEFGGDTYGSDNFMQQRGNGFATYRSTDFFGLVDGLNFAVQYQGKNGSPEGEGMTNNGREALRQNGDGVGGSITYDYEGFGIGAAVSSSKRTDDQNFGLNRYDERYIGNGDRAETYTGGLKYDANNIYLAAQYTQTYNATRVGNLGWANKAQNFEAVAQYQFDFGLRPSLAYLQSKGKNLGVINGRNYDDEDILKYVDVGATYYFNKNMSTYVDYKINLLDDNQFTRDAGINTDNIVALGLVYQF.

Positions 1–21 (MKVKVLSLLVPALLVAGAANA) are cleaved as a signal peptide. Beta stranded transmembrane passes span 34–42 (LYGKVDGLH), 54–63 (QTYMRLGFKG), 74–84 (YGQWEYQIQGN), 92–101 (SWTRVAFAGL), and 107–115 (GSFDYGRNY). Positions 116–133 (GVVYDVTSWTDVLPEFGG) are loop L3; may constrict the pore. The next 11 membrane-spanning stretches (beta stranded) occupy residues 142 to 154 (MQQRGNGFATYRS), 164 to 171 (LNFAVQYQ), 197 to 203 (VGGSITY), 208 to 215 (FGIGAAVS), 244 to 250 (YTGGLKY), 255 to 262 (IYLAAQYT), 272 to 288 (NLGWANKAQNFEAVAQY), 294 to 301 (LRPSLAYL), 325 to 332 (VDVGATYY), 337 to 344 (MSTYVDYK), and 365 to 372 (VALGLVYQ).

Belongs to the Gram-negative porin family. As to quaternary structure, homotrimer. Forms mixed heterotrimers with OmpF and with PhoE; other mixed heterotrimers are also probable. (Microbial infection) Upon infection with phage Sf6 associates with the mature bacteriophage capsid. Was originally suggested to be within the bacteriophage capsid. This has been disproven.

Its subcellular location is the cell outer membrane. It is found in the extracellular vesicle. Its function is as follows. Forms pores that allow passive diffusion of small molecules across the outer membrane. Functionally, (Microbial infection) Serves as a less-preferential secondary receptor during phage Sf6 infection; infection requires both lipopolysaccharide (LPS) and (in the absence of OmpA) OmpC can serve as the secondary receptor. The sequence is that of Outer membrane protein C (ompC) from Shigella flexneri.